A 386-amino-acid chain; its full sequence is MHLHEYQAKDLLTAYQLPIPPYHVATSVPEVEAAIQAEQWKAGVVKAQVHAGGRGKNGGVVIAHSPEDLLAAADKLLHMQFSSNQTAGLSLPVNKVLISPLVEIASEYYLAIVIDRKHRCPVIMLSKAGGVDIEEVAEKQPDQLLKMTLPSSGKIYGYQLRRIAKFMEWDQPIADQGNRIIRQLLQCFYEKDASLLEINPLVLTKDGSLVILDAKMTIDDNALYRHPELADCYDPSQENIRDVLAKQLGLSYIALDGTIGCLVNGAGLAMSTLDILKLYGGSAANFLDVGGSASEKQIQEAISLVLSDKSVRVLFIHIFGGIMDCAVVASGLVSAMQGQKETIPTVIRLEGTNVDKGKGMIINAGIPCEFVTSMSEGAELAVQLSR.

The ATP-grasp domain maps to 9-244 (KDLLTAYQLP…PSQENIRDVL (236 aa)). Residues lysine 46, 53 to 55 (GRG), valine 102, and glutamate 107 each bind ATP. 2 residues coordinate Mg(2+): asparagine 199 and aspartate 213. Residues asparagine 264 and 321–323 (GIM) each bind substrate.

This sequence belongs to the succinate/malate CoA ligase beta subunit family. As to quaternary structure, heterotetramer of two alpha and two beta subunits. The cofactor is Mg(2+).

The enzyme catalyses succinate + ATP + CoA = succinyl-CoA + ADP + phosphate. The catalysed reaction is GTP + succinate + CoA = succinyl-CoA + GDP + phosphate. Its pathway is carbohydrate metabolism; tricarboxylic acid cycle; succinate from succinyl-CoA (ligase route): step 1/1. Functionally, succinyl-CoA synthetase functions in the citric acid cycle (TCA), coupling the hydrolysis of succinyl-CoA to the synthesis of either ATP or GTP and thus represents the only step of substrate-level phosphorylation in the TCA. The beta subunit provides nucleotide specificity of the enzyme and binds the substrate succinate, while the binding sites for coenzyme A and phosphate are found in the alpha subunit. This chain is Succinate--CoA ligase [ADP-forming] subunit beta, found in Chlamydia trachomatis serovar L2 (strain ATCC VR-902B / DSM 19102 / 434/Bu).